Reading from the N-terminus, the 235-residue chain is Octanoyltransferase LIP2, mitochondrial (235 aa).

Residues 1–32 (MRSPRTLEVWKLGTVNYLKSLKLQEKLVSERK) constitute a mitochondrion transit peptide. One can recognise a BPL/LPL catalytic domain in the interval 34-218 (HQIPDTLLSL…CLAKAFSYDD (185 aa)). Substrate-binding positions include 79–86 (RGGDITFH), 147–149 (AIG), and 160–162 (GLA). C178 serves as the catalytic Acyl-thioester intermediate.

This sequence belongs to the LipB family. As to expression, expressed in leaves. Expressed in roots, rosette leaves, cauline leaves, stems and siliques.

It is found in the mitochondrion. It catalyses the reaction octanoyl-[ACP] + L-lysyl-[protein] = N(6)-octanoyl-L-lysyl-[protein] + holo-[ACP] + H(+). It participates in protein modification; protein lipoylation via endogenous pathway; protein N(6)-(lipoyl)lysine from octanoyl-[acyl-carrier-protein]: step 1/2. Catalyzes the transfer of endogenously produced octanoic acid from octanoyl-acyl-carrier-protein onto the lipoyl domains of lipoate-dependent enzymes. Lipoyl-ACP can also act as a substrate although octanoyl-ACP is likely to be the physiological substrate. Together with LIP1 is essential for mitochondrial protein lipoylation during seed development. Required for the lipoylation of mitochondrial 2-oxoglutarate dehydrogenase component E2 proteins in leaves and roots. The polypeptide is Octanoyltransferase LIP2, mitochondrial (Arabidopsis thaliana (Mouse-ear cress)).